A 1884-amino-acid chain; its full sequence is Fatty acid synthase subunit alpha (1884 aa).

Positions 91–141 are disordered; the sequence is TPDPAEPPAAEEPKAETGKESAPAASAAAAAATQPAAAVAPPPQSAGPVES. The segment covering 111 to 129 has biased composition (low complexity); it reads SAPAASAAAAAATQPAAAV. The Carrier domain occupies 147–222; that stretch reads VKASLLIHVL…EQFQDTFSGS (76 aa). Ser-182 carries the post-translational modification O-(pantetheine 4'-phosphoryl)serine. Residues 583–613 are disordered; that stretch reads TEQTTQDALAIPTGSNTPTEEDELSTASDDD. Polar residues predominate over residues 584 to 600; sequence EQTTQDALAIPTGSNTP. A compositionally biased stretch (acidic residues) spans 601–613; that stretch reads TEEDELSTASDDD. The segment at 677–873 is beta-ketoacyl reductase; the sequence is DKYVLVTGAG…CGAIIGWTRG (197 aa). A Ketosynthase family 3 (KS3) domain is found at 1120–1660; the sequence is IQEVVIQHDL…QKGAQAVVVH (541 aa). Catalysis depends on for beta-ketoacyl synthase activity residues Cys-1303, His-1545, and His-1586. Positions 1770, 1771, and 1772 each coordinate Mg(2+). Acetyl-CoA contacts are provided by residues 1770–1772, Tyr-1796, Ser-1806, 1815–1825, 1839–1842, and 1869–1871; these read DVE, EATFKALGVSS, RDGN, and ISH. Mg(2+) is bound by residues Ser-1870 and His-1871.

The protein belongs to the thiolase-like superfamily. Fungal fatty acid synthetase subunit alpha family. As to quaternary structure, fatty acid synthase is composed of alpha and beta subunits.

It carries out the reaction acetyl-CoA + n malonyl-CoA + 2n NADPH + 4n H(+) = a long-chain-acyl-CoA + n CoA + n CO2 + 2n NADP(+).. It catalyses the reaction a fatty acyl-[ACP] + malonyl-[ACP] + H(+) = a 3-oxoacyl-[ACP] + holo-[ACP] + CO2. The enzyme catalyses a (3R)-hydroxyacyl-[ACP] + NADP(+) = a 3-oxoacyl-[ACP] + NADPH + H(+). Functionally, fatty acid synthetase catalyzes the formation of long-chain fatty acids from acetyl-CoA, malonyl-CoA and NADPH. The alpha subunit contains domains for: acyl carrier protein, 3-oxoacyl-[acyl-carrier-protein] reductase, and 3-oxoacyl-[acyl-carrier-protein] synthase. This is Fatty acid synthase subunit alpha (FAS2) from Candida parapsilosis (strain CDC 317 / ATCC MYA-4646) (Yeast).